The following is a 578-amino-acid chain: MTEDNDEARVPLSDSSTTNDASRTRQRRKRKWDKPAEQLVAAGVAFPQLLPLGNTMNVPSMSPLLQTLSVPLAVPKVNQPKIQDEVIIAREIVINDAEASLRHRLTKRSTQEDIQRSTGAVVITRGKYRPPNAPPDGEKPLYLHISAAAQLQLKETTERILAVDRAAAMIEEMMKQKSISQIGSVGLQTVKMLSTCVYLGFEADPSSNVAARIRGPNDQYINHIMNETGATVVLRGRGSGSLENQHGDEAQLPLHLLLSGSNPKSIDDAKRLAENLMDTISVEFGASRVSSSKVYGAVPPPQQLISGAPGSDQENQNLISTYGLMTSIPITAPPYAVSSFPVTPATSLYPQFPVMQSLGISNGGPSQPVAGGTSYSGYAGIYPQATPLQQVAQVLKQSISPVISTVPPTMLTATSLSIPSDNASNEMERRPPRKRKFQELPADCKVPEKDKQQSELAMTGDVTPSANRVRSPPSPRSVMPPPPPKTIAPPPSKTMSPPSSKSMLPPPPRSKTMSPLSSKSMLPPPPRFTLTTQRSRLQDNHISVKKPNPVPDTLIKLMEYGDDEDDDDDPDEPLTTRS.

The interval 1-34 is disordered; sequence MTEDNDEARVPLSDSSTTNDASRTRQRRKRKWDK. Residues 206 to 273 enclose the KH domain; the sequence is SSNVAARIRG…KSIDDAKRLA (68 aa). Positions 413–425 are enriched in polar residues; that stretch reads ATSLSIPSDNASN. The disordered stretch occupies residues 413–578; it reads ATSLSIPSDN…DPDEPLTTRS (166 aa). Positions 472–492 are enriched in pro residues; that stretch reads PPSPRSVMPPPPPKTIAPPPS. Composition is skewed to low complexity over residues 493–503 and 510–521; these read KTMSPPSSKSM and SKTMSPLSSKSM. Residues 560–572 show a composition bias toward acidic residues; sequence YGDDEDDDDDPDE.

As to quaternary structure, interacts with AS1. As to expression, expressed in vegetative tissues.

It is found in the nucleus. This chain is Protein RIK (RIK), found in Arabidopsis thaliana (Mouse-ear cress).